A 127-amino-acid polypeptide reads, in one-letter code: Calcium-binding protein PBP1 (127 aa).

Polar residues predominate over residues Met1–Gln18. Residues Met1–Gln20 are disordered. An EF-hand domain is found at Leu72–Glu107. Residues Asp85, Asp87, Asp89, and Glu96 each coordinate Ca(2+).

As to quaternary structure, interacts with PID.

Potential calcium sensor that binds calcium in vitro. The chain is Calcium-binding protein PBP1 (PBP1) from Arabidopsis thaliana (Mouse-ear cress).